A 1828-amino-acid chain; its full sequence is AT-rich interactive domain-containing protein 2 (1828 aa).

N-acetylalanine is present on Ala-2. A Phosphoserine modification is found at Ser-4. Residues Lys-7, Lys-15, and Lys-119 each participate in a glycyl lysine isopeptide (Lys-Gly) (interchain with G-Cter in SUMO2) cross-link. The 93-residue stretch at 13 to 105 (RRKGLAFLDE…YLEKYEKVHH (93 aa)) folds into the ARID domain. Positions 313 to 317 (LRFLL) match the LXXLL motif. The RFX-type winged-helix DNA-binding region spans 524–603 (ACQWLNAHFE…IHVIGVKRRA (80 aa)). Residue Lys-555 forms a Glycyl lysine isopeptide (Lys-Gly) (interchain with G-Cter in SUMO2) linkage. Residues Ser-631 and Ser-635 each carry the phosphoserine modification. At Thr-653 the chain carries Phosphothreonine. At Ser-689 the chain carries Phosphoserine. The residue at position 692 (Thr-692) is a Phosphothreonine. Disordered regions lie at residues 824–843 (TSPQ…SQPQ), 962–1028 (LTGQ…QVQV), 1245–1339 (KEAT…EPVD), 1360–1462 (KGDG…RPSV), 1483–1503 (HSGP…TNGT), and 1566–1618 (SAAQ…HADP). Residues 987-1011 (AMSSSSTLQSQGPPPTVSQMLSVKR) are compositionally biased toward polar residues. Residues 1012–1028 (QQQQQHSPAAPAQQVQV) show a composition bias toward low complexity. Over residues 1245 to 1259 (KEATGLHVHERKIEV) the composition is skewed to basic and acidic residues. The segment covering 1267–1283 (RGTTNTSNGDTSESELQ) has biased composition (polar residues). Ser-1294 carries the post-translational modification Phosphoserine. Polar residues-rich tracts occupy residues 1295 to 1320 (DSSL…SNGP) and 1366 to 1379 (LSKN…SNHV). Ser-1385 carries the phosphoserine modification. Composition is skewed to polar residues over residues 1390 to 1400 (QGTSGATQQDT) and 1419 to 1428 (GSPSTSSMQE). The span at 1453–1462 (SDVPQQRPSV) shows a compositional bias: low complexity. Phosphoserine is present on Ser-1491. Composition is skewed to polar residues over residues 1491–1503 (SALS…TNGT) and 1567–1586 (AAQQ…APQN). Residues 1594 to 1614 (AVQVQGQPSSSQPSPVSASSQ) are compositionally biased toward low complexity. The C2H2-type zinc-finger motif lies at 1626-1651 (FMCLWQSCKKWFQTPSQVFYHAATEH). Residues Lys-1695, Lys-1710, and Lys-1725 each participate in a glycyl lysine isopeptide (Lys-Gly) (interchain with G-Cter in SUMO2) cross-link. The tract at residues 1697 to 1726 (DEPGQVANQKSSTKQPTVGGTGSAPRAQKA) is disordered. Residues 1702 to 1714 (VANQKSSTKQPTV) are compositionally biased toward polar residues.

The protein belongs to the RFX family. Component of the SWI/SNF-B (PBAF) chromatin remodeling complex, at least composed of SMARCA4/BRG1, SMARCB1/BAF47/SNF5, ACTL6A/BAF53A or ACTL6B/BAF53B, SMARCE1/BAF57, SMARCD1/BAF60A, SMARCD2/BAF60B, perhaps SMARCD3/BAF60C, SMARCC1/BAF155, SMARCC2/BAF170, PBRM1/BAF180, ARID2/BAF200 and actin. Interacts with SRF. Forms complexes with SRF and SRF cofactors MYOCD, NKX2-5 and SRFBP1. As to expression, highly expressed in testis, expressed in heart, liver and kidney.

It localises to the nucleus. Functionally, involved in transcriptional activation and repression of select genes by chromatin remodeling (alteration of DNA-nucleosome topology). Required for the stability of the SWI/SNF chromatin remodeling complex SWI/SNF-B (PBAF). May be involved in targeting the complex to different genes. May be involved in regulating transcriptional activation of cardiac genes. In Mus musculus (Mouse), this protein is AT-rich interactive domain-containing protein 2.